The following is a 244-amino-acid chain: Probable transcriptional regulatory protein Dgeo_2194 (244 aa).

The interval 1–21 (MAGHSKWAQIKRKKGANDKKR) is disordered.

The protein belongs to the TACO1 family.

Its subcellular location is the cytoplasm. This Deinococcus geothermalis (strain DSM 11300 / CIP 105573 / AG-3a) protein is Probable transcriptional regulatory protein Dgeo_2194.